A 386-amino-acid chain; its full sequence is Cytochrome b (386 aa).

Transmembrane regions (helical) follow at residues Leu-32–Met-52, Tyr-76–Gly-98, Val-113–Cys-133, and Phe-179–Met-199. Residues His-82 and His-96 each coordinate heme b. Heme b contacts are provided by His-183 and His-197. Position 202 (His-202) interacts with a ubiquinone. The next 4 membrane-spanning stretches (helical) occupy residues Phe-225–Phe-245, Leu-289–Asp-309, Ile-321–Gln-341, and Phe-348–Pro-368.

It belongs to the cytochrome b family. Fungal cytochrome b-c1 complex contains 10 subunits; 3 respiratory subunits, 2 core proteins and 5 low-molecular weight proteins. Cytochrome b-c1 complex is a homodimer. The cofactor is heme b.

It localises to the mitochondrion inner membrane. Its function is as follows. Component of the ubiquinol-cytochrome c reductase complex (complex III or cytochrome b-c1 complex) that is part of the mitochondrial respiratory chain. The b-c1 complex mediates electron transfer from ubiquinol to cytochrome c. Contributes to the generation of a proton gradient across the mitochondrial membrane that is then used for ATP synthesis. The polypeptide is Cytochrome b (COB) (Wickerhamomyces canadensis (Yeast)).